A 209-amino-acid polypeptide reads, in one-letter code: Ion-translocating oxidoreductase complex subunit G (209 aa).

A helical transmembrane segment spans residues 9 to 29 (GITLAIFAALTTGLTAVVNSL). Threonine 175 is modified (FMN phosphoryl threonine).

The protein belongs to the RnfG family. The complex is composed of six subunits: RnfA, RnfB, RnfC, RnfD, RnfE and RnfG. FMN is required as a cofactor.

It localises to the cell inner membrane. Part of a membrane-bound complex that couples electron transfer with translocation of ions across the membrane. This chain is Ion-translocating oxidoreductase complex subunit G, found in Photorhabdus laumondii subsp. laumondii (strain DSM 15139 / CIP 105565 / TT01) (Photorhabdus luminescens subsp. laumondii).